The primary structure comprises 436 residues: RNA-binding motif, single-stranded-interacting protein 3 (436 aa).

The segment at 28–56 is disordered; that stretch reads APAPHPMAPPSPSTNSSSNNSSNNSSGEQ. Positions 30 to 39 are enriched in pro residues; that stretch reads APHPMAPPSP. A compositionally biased stretch (low complexity) spans 40-53; the sequence is STNSSSNNSSNNSS. 2 consecutive RRM domains span residues 60–133 and 139–224; these read TNLY…MAKQ and TNLY…FADG. Polar residues predominate over residues 398–421; it reads TSPQTVAPSSQDTSGQQQQIAVDT. The segment at 398 to 436 is disordered; it reads TSPQTVAPSSQDTSGQQQQIAVDTSNEHAPAYSYQQSKP.

The protein localises to the cytoplasm. Its function is as follows. Binds poly(A) and poly(U) oligoribonucleotides. The polypeptide is RNA-binding motif, single-stranded-interacting protein 3 (RBMS3) (Pongo abelii (Sumatran orangutan)).